We begin with the raw amino-acid sequence, 132 residues long: Small ribosomal subunit protein uS12 (132 aa).

Aspartate 89 bears the 3-methylthioaspartic acid mark. The tract at residues 106 to 132 is disordered; the sequence is GVKDRKKSRSKYGTKKPKEAAKTAAKK. Positions 109 to 120 are enriched in basic residues; it reads DRKKSRSKYGTK.

This sequence belongs to the universal ribosomal protein uS12 family. In terms of assembly, part of the 30S ribosomal subunit. Contacts proteins S8 and S17. May interact with IF1 in the 30S initiation complex.

With S4 and S5 plays an important role in translational accuracy. Functionally, interacts with and stabilizes bases of the 16S rRNA that are involved in tRNA selection in the A site and with the mRNA backbone. Located at the interface of the 30S and 50S subunits, it traverses the body of the 30S subunit contacting proteins on the other side and probably holding the rRNA structure together. The combined cluster of proteins S8, S12 and S17 appears to hold together the shoulder and platform of the 30S subunit. The chain is Small ribosomal subunit protein uS12 (rpsL) from Thermus thermophilus (strain ATCC BAA-163 / DSM 7039 / HB27).